The following is a 337-amino-acid chain: Arylacetonitrilase (337 aa).

Positions 7–278 (VRVAVTQHEP…EGFVYADLDL (272 aa)) constitute a CN hydrolase domain. Glu47 serves as the catalytic Proton acceptor. The active site involves Lys127. Cys162 (nucleophile) is an active-site residue. The interval 311–337 (QHRPEGQADNAAYGLDVPSGLVEEEGA) is disordered.

This sequence belongs to the carbon-nitrogen hydrolase superfamily. Nitrilase family.

It carries out the reaction a nitrile + 2 H2O = a carboxylate + NH4(+). The catalysed reaction is 4-chlorophenylacetonitrile + 2 H2O = 4-chlorophenylacetate + NH4(+). In terms of biological role, nitrilase that hydrolyzes preferentially phenylacetonitrile, but also (R,S)-mandelonitrile, and 2-phenylpropionitrile. The sequence is that of Arylacetonitrilase from Aspergillus niger (strain ATCC MYA-4892 / CBS 513.88 / FGSC A1513).